Consider the following 451-residue polypeptide: Trigger factor (451 aa).

The PPIase FKBP-type domain occupies 163–248 (GDIIDMEYTV…IKALYANILP (86 aa)).

It belongs to the FKBP-type PPIase family. Tig subfamily.

The protein resides in the cytoplasm. It carries out the reaction [protein]-peptidylproline (omega=180) = [protein]-peptidylproline (omega=0). Involved in protein export. Acts as a chaperone by maintaining the newly synthesized protein in an open conformation. Functions as a peptidyl-prolyl cis-trans isomerase. The chain is Trigger factor from Leptospira interrogans serogroup Icterohaemorrhagiae serovar copenhageni (strain Fiocruz L1-130).